Consider the following 115-residue polypeptide: NADH-ubiquinone oxidoreductase chain 3 (115 aa).

Transmembrane regions (helical) follow at residues 3–23 (LILM…IVAF), 56–76 (FFLV…LLPL), and 84–104 (PTLM…GLIY).

This sequence belongs to the complex I subunit 3 family.

The protein resides in the mitochondrion membrane. The enzyme catalyses a ubiquinone + NADH + 5 H(+)(in) = a ubiquinol + NAD(+) + 4 H(+)(out). In terms of biological role, core subunit of the mitochondrial membrane respiratory chain NADH dehydrogenase (Complex I) that is believed to belong to the minimal assembly required for catalysis. Complex I functions in the transfer of electrons from NADH to the respiratory chain. The immediate electron acceptor for the enzyme is believed to be ubiquinone. In Polypterus ornatipinnis (Ornate bichir), this protein is NADH-ubiquinone oxidoreductase chain 3 (MT-ND3).